The primary structure comprises 191 residues: Shikimate kinase (191 aa).

An ATP-binding site is contributed by 24–29; that stretch reads GSGKTS. T28 is a Mg(2+) binding site. Substrate is bound by residues D46, R70, and G92. ATP is bound at residue R130. A substrate-binding site is contributed by R149.

Belongs to the shikimate kinase family. In terms of assembly, monomer. The cofactor is Mg(2+).

It is found in the cytoplasm. The catalysed reaction is shikimate + ATP = 3-phosphoshikimate + ADP + H(+). It participates in metabolic intermediate biosynthesis; chorismate biosynthesis; chorismate from D-erythrose 4-phosphate and phosphoenolpyruvate: step 5/7. Catalyzes the specific phosphorylation of the 3-hydroxyl group of shikimic acid using ATP as a cosubstrate. This Parasynechococcus marenigrum (strain WH8102) protein is Shikimate kinase.